The primary structure comprises 370 residues: Aminomethyltransferase (370 aa).

This sequence belongs to the GcvT family. As to quaternary structure, the glycine cleavage system is composed of four proteins: P, T, L and H.

The enzyme catalyses N(6)-[(R)-S(8)-aminomethyldihydrolipoyl]-L-lysyl-[protein] + (6S)-5,6,7,8-tetrahydrofolate = N(6)-[(R)-dihydrolipoyl]-L-lysyl-[protein] + (6R)-5,10-methylene-5,6,7,8-tetrahydrofolate + NH4(+). In terms of biological role, the glycine cleavage system catalyzes the degradation of glycine. This Clostridium botulinum (strain Langeland / NCTC 10281 / Type F) protein is Aminomethyltransferase.